The chain runs to 160 residues: Na(+)/H(+) antiporter subunit E1 (160 aa).

Transmembrane regions (helical) follow at residues 1–21, 27–47, 49–69, and 101–121; these read MAIQ…VTGS, FILG…VLPG, FYLI…IELI, and WQIV…VLGI.

It belongs to the CPA3 antiporters (TC 2.A.63) subunit E family. In terms of assembly, may form a heterooligomeric complex that consists of seven subunits: mnhA1, mnhB1, mnhC1, mnhD1, mnhE1, mnhF1 and mnhG1.

It is found in the cell membrane. Mnh complex is a Na(+)/H(+) antiporter involved in Na(+) excretion. The sequence is that of Na(+)/H(+) antiporter subunit E1 (mnhE1) from Staphylococcus saprophyticus subsp. saprophyticus (strain ATCC 15305 / DSM 20229 / NCIMB 8711 / NCTC 7292 / S-41).